The following is a 447-amino-acid chain: Glutamate--tRNA ligase 1 (447 aa).

Positions proline 10 to asparagine 20 match the 'HIGH' region motif. Residues lysine 240–arginine 244 carry the 'KMSKS' region motif. An ATP-binding site is contributed by lysine 243.

This sequence belongs to the class-I aminoacyl-tRNA synthetase family. Glutamate--tRNA ligase type 1 subfamily. As to quaternary structure, monomer.

Its subcellular location is the cytoplasm. It catalyses the reaction tRNA(Glu) + L-glutamate + ATP = L-glutamyl-tRNA(Glu) + AMP + diphosphate. Catalyzes the attachment of glutamate to tRNA(Glu) in a two-step reaction: glutamate is first activated by ATP to form Glu-AMP and then transferred to the acceptor end of tRNA(Glu). The protein is Glutamate--tRNA ligase 1 of Rickettsia akari (strain Hartford).